The chain runs to 151 residues: UPF0178 protein YaiI (151 aa).

This sequence belongs to the UPF0178 family.

The polypeptide is UPF0178 protein YaiI (Salmonella paratyphi B (strain ATCC BAA-1250 / SPB7)).